A 105-amino-acid polypeptide reads, in one-letter code: NADH-quinone oxidoreductase subunit K (105 aa).

The next 3 membrane-spanning stretches (helical) occupy residues L4–V24, I28–A48, and L66–V86.

Belongs to the complex I subunit 4L family. NDH-1 is composed of 14 different subunits. Subunits NuoA, H, J, K, L, M, N constitute the membrane sector of the complex.

Its subcellular location is the cell inner membrane. The enzyme catalyses a quinone + NADH + 5 H(+)(in) = a quinol + NAD(+) + 4 H(+)(out). Functionally, NDH-1 shuttles electrons from NADH, via FMN and iron-sulfur (Fe-S) centers, to quinones in the respiratory chain. The immediate electron acceptor for the enzyme in this species is believed to be ubiquinone. Couples the redox reaction to proton translocation (for every two electrons transferred, four hydrogen ions are translocated across the cytoplasmic membrane), and thus conserves the redox energy in a proton gradient. The sequence is that of NADH-quinone oxidoreductase subunit K from Akkermansia muciniphila (strain ATCC BAA-835 / DSM 22959 / JCM 33894 / BCRC 81048 / CCUG 64013 / CIP 107961 / Muc).